A 1130-amino-acid polypeptide reads, in one-letter code: MHC class II transactivator (1130 aa).

The required for acetyltransferase activity stretch occupies residues 94-132; the sequence is AYANIAELDQYVFQDSQLEGLSKDIFKHIGPDEVIGESM. The tract at residues 269-303 is disordered; it reads PSGFTVHGLPTSPDRPGSTSPFAPSATDLPSMPEP. The region spanning 414–724 is the NACHT domain; it reads RVIAVLGKAG…CFLGALWLAL (311 aa). 420–427 contributes to the GTP binding site; it reads GKAGQGKS. LRR repeat units follow at residues 985–1008, 1016–1037, 1045–1066, and 1073–1093; these read SLQHLDLDALSENKIGDEGVSQLS, SLETLNLSQNNITDLGAYKLAE, SLLRLSLYNNCICDVGAESLAR, and SLRVMDVQYNKFTAAGAQQLA.

In terms of assembly, interacts with ZXDA and ZXDC. Interacts with PML (isoform PML-2). Interacts with TAF7; interaction inhibits CIITA acetyltransferase activity, thereby repressing transcription. Autophosphorylated, affecting interaction with TAF7.

It is found in the nucleus. The protein localises to the PML body. It carries out the reaction L-seryl-[protein] + ATP = O-phospho-L-seryl-[protein] + ADP + H(+). The catalysed reaction is L-threonyl-[protein] + ATP = O-phospho-L-threonyl-[protein] + ADP + H(+). In terms of biological role, essential for transcriptional activity of the HLA class II promoter; activation is via the proximal promoter. Does not bind DNA. May act in a coactivator-like fashion through protein-protein interactions by contacting factors binding to the proximal MHC class II promoter, to elements of the transcription machinery, or both PubMed:8402893, PubMed:7749984,. Alternatively it may activate HLA class II transcription by modifying proteins that bind to the MHC class II promoter. Also mediates enhanced MHC class I transcription; the promoter element requirements for CIITA-mediated transcription are distinct from those of constitutive MHC class I transcription, and CIITA can functionally replace TAF1 at these genes. Activates CD74 transcription. Exhibits intrinsic GTP-stimulated acetyltransferase activity. Exhibits serine/threonine protein kinase activity: can phosphorylate the TFIID component TAF7, the RAP74 subunit of the general transcription factor TFIIF, histone H2B at 'Ser-37' and other histones (in vitro). Has antiviral activity against Ebola virus and coronaviruses, including SARS-CoV-2. Induces resistance by up-regulation of the p41 isoform of CD74, which blocks cathepsin-mediated cleavage of viral glycoproteins, thereby preventing viral fusion. Functionally, exhibits dominant-negative suppression of MHC class II gene expression. The sequence is that of MHC class II transactivator from Homo sapiens (Human).